Reading from the N-terminus, the 498-residue chain is DEAD-box ATP-dependent RNA helicase 12 (498 aa).

The segment at 1–114 (MNTNRGRYPP…RLPPPDTRYQ (114 aa)) is disordered. The span at 27 to 65 (SYRQQQPPQDQQYVQRGYSQNPQQMQLQQQHQQQQQQQQ) shows a compositional bias: low complexity. Positions 74-96 (GNASNANEVVQQTTQPEASSDAN) are enriched in polar residues. The short motif at 124 to 152 (NEFEDYFLKRDLLKGIYEKGFEKPSPIQE) is the Q motif element. In terms of domain architecture, Helicase ATP-binding spans 155–325 (IPIALTGSDI…DRHLRKPYVI (171 aa)). 168–175 (AKNGTGKT) lines the ATP pocket. At Thr-230 the chain carries Phosphothreonine. The DEAD box signature appears at 273–276 (DEAD). The Helicase C-terminal domain occupies 335–495 (GVTQYYAFVE…PIPSNIDQAI (161 aa)).

The protein belongs to the DEAD box helicase family. DDX6/DHH1 subfamily.

The protein resides in the cytoplasm. It is found in the P-body. The catalysed reaction is ATP + H2O = ADP + phosphate + H(+). Functionally, ATP-dependent RNA helicase involved in mRNA turnover, and more specifically in mRNA decapping. The sequence is that of DEAD-box ATP-dependent RNA helicase 12 (RH12) from Arabidopsis thaliana (Mouse-ear cress).